Consider the following 445-residue polypeptide: MKERKFFGTDGIRGKVGSGQMTPELALKLGWAAGRVLSRSGTKKVIIGKDTRISGYMFESALEAGLSAAGLNVMLMGPMPTPAVAYLTRTFRAEAGVVISASHNPYYDNGIKFFSTDGSKLDDNLELEIEAELEKPLVCVESHLLGKVSRIEDARGRYIEYCKGNFPAEHTLTGLKIVVDCAHGATYHIAPAVFRELGAEVIAIGDKPNGMNINDKVGATSMGKICETVLAESADLGIALDGDGDRIMMVNSKGEVIDGDQILYILACDAKSRGVLRGGVVGTLMSNLGLDLALQALDIPFARSKVGDRYVMELLKELDWRIGGENSGHILNLDHGTTGDGIIAGILVLAAMRRQNATLEELTSAMEMLPQVLVNVRFEGEHDPLKSDKVKAVQAQVESQLGLRGRVLLRKSGTEPLIRVMVEGDDHSAVLAHANLIADAVKSAS.

The active-site Phosphoserine intermediate is the serine 102. Residues serine 102, aspartate 241, aspartate 243, and aspartate 245 each coordinate Mg(2+). A Phosphoserine modification is found at serine 102.

It belongs to the phosphohexose mutase family. Mg(2+) serves as cofactor. Post-translationally, activated by phosphorylation.

The catalysed reaction is alpha-D-glucosamine 1-phosphate = D-glucosamine 6-phosphate. In terms of biological role, catalyzes the conversion of glucosamine-6-phosphate to glucosamine-1-phosphate. The protein is Phosphoglucosamine mutase of Shewanella sp. (strain W3-18-1).